The following is a 394-amino-acid chain: NAD(P)H-quinone oxidoreductase subunit H (394 aa).

It belongs to the complex I 49 kDa subunit family. NDH-1 can be composed of about 15 different subunits; different subcomplexes with different compositions have been identified which probably have different functions.

Its subcellular location is the cellular thylakoid membrane. It carries out the reaction a plastoquinone + NADH + (n+1) H(+)(in) = a plastoquinol + NAD(+) + n H(+)(out). It catalyses the reaction a plastoquinone + NADPH + (n+1) H(+)(in) = a plastoquinol + NADP(+) + n H(+)(out). Functionally, NDH-1 shuttles electrons from an unknown electron donor, via FMN and iron-sulfur (Fe-S) centers, to quinones in the respiratory and/or the photosynthetic chain. The immediate electron acceptor for the enzyme in this species is believed to be plastoquinone. Couples the redox reaction to proton translocation, and thus conserves the redox energy in a proton gradient. Cyanobacterial NDH-1 also plays a role in inorganic carbon-concentration. The polypeptide is NAD(P)H-quinone oxidoreductase subunit H (Prochlorococcus marinus (strain NATL2A)).